The sequence spans 395 residues: Elongation factor Tu (395 aa).

The tr-type G domain occupies 10–205 (KPHVNVGTIG…VDNDIPIPPR (196 aa)). A G1 region spans residues 19–26 (GHVDHGKT). 19–26 (GHVDHGKT) contributes to the GTP binding site. Residue T26 participates in Mg(2+) binding. A G2 region spans residues 60-64 (GITIN). Residues 81–84 (DCPG) are G3. Residues 81 to 85 (DCPGH) and 136 to 139 (NKVD) each bind GTP. Residues 136–139 (NKVD) form a G4 region. The interval 174 to 176 (SAL) is G5.

Belongs to the TRAFAC class translation factor GTPase superfamily. Classic translation factor GTPase family. EF-Tu/EF-1A subfamily. Monomer.

The protein localises to the cytoplasm. It catalyses the reaction GTP + H2O = GDP + phosphate + H(+). Its function is as follows. GTP hydrolase that promotes the GTP-dependent binding of aminoacyl-tRNA to the A-site of ribosomes during protein biosynthesis. The protein is Elongation factor Tu of Cytophaga hutchinsonii (strain ATCC 33406 / DSM 1761 / CIP 103989 / NBRC 15051 / NCIMB 9469 / D465).